The chain runs to 571 residues: Glutamine--tRNA ligase (571 aa).

The short motif at 35–45 (PEPNGYLHIGH) is the 'HIGH' region element. ATP contacts are provided by residues 36–38 (EPN) and 42–48 (HIGHAKS). L-glutamine-binding residues include Asp68 and Tyr213. Residues Thr232, 262–263 (RL), and 270–272 (LSK) contribute to the ATP site. A 'KMSKS' region motif is present at residues 269–273 (ILSKR).

It belongs to the class-I aminoacyl-tRNA synthetase family. As to quaternary structure, monomer.

It localises to the cytoplasm. The catalysed reaction is tRNA(Gln) + L-glutamine + ATP = L-glutaminyl-tRNA(Gln) + AMP + diphosphate. The polypeptide is Glutamine--tRNA ligase (Buchnera aphidicola subsp. Acyrthosiphon pisum (strain 5A)).